A 184-amino-acid chain; its full sequence is ATP synthase subunit b, chloroplastic (184 aa).

Residues 27–49 traverse the membrane as a helical segment; the sequence is LATNPINLSVVLGVLIFFGKGVL.

It belongs to the ATPase B chain family. In terms of assembly, F-type ATPases have 2 components, F(1) - the catalytic core - and F(0) - the membrane proton channel. F(1) has five subunits: alpha(3), beta(3), gamma(1), delta(1), epsilon(1). F(0) has four main subunits: a(1), b(1), b'(1) and c(10-14). The alpha and beta chains form an alternating ring which encloses part of the gamma chain. F(1) is attached to F(0) by a central stalk formed by the gamma and epsilon chains, while a peripheral stalk is formed by the delta, b and b' chains.

The protein localises to the plastid. The protein resides in the chloroplast thylakoid membrane. F(1)F(0) ATP synthase produces ATP from ADP in the presence of a proton or sodium gradient. F-type ATPases consist of two structural domains, F(1) containing the extramembraneous catalytic core and F(0) containing the membrane proton channel, linked together by a central stalk and a peripheral stalk. During catalysis, ATP synthesis in the catalytic domain of F(1) is coupled via a rotary mechanism of the central stalk subunits to proton translocation. In terms of biological role, component of the F(0) channel, it forms part of the peripheral stalk, linking F(1) to F(0). The sequence is that of ATP synthase subunit b, chloroplastic from Populus alba (White poplar).